We begin with the raw amino-acid sequence, 407 residues long: Imidazolonepropionase (407 aa).

2 residues coordinate Fe(3+): H68 and H70. The Zn(2+) site is built by H68 and H70. 4-imidazolone-5-propanoate contacts are provided by R77, Y140, and H173. Y140 lines the N-formimidoyl-L-glutamate pocket. H238 provides a ligand contact to Fe(3+). Zn(2+) is bound at residue H238. Q241 serves as a coordination point for 4-imidazolone-5-propanoate. Fe(3+) is bound at residue D313. D313 serves as a coordination point for Zn(2+). N-formimidoyl-L-glutamate is bound by residues N315 and G317. T318 contacts 4-imidazolone-5-propanoate.

The protein belongs to the metallo-dependent hydrolases superfamily. HutI family. Requires Zn(2+) as cofactor. It depends on Fe(3+) as a cofactor.

The protein resides in the cytoplasm. It catalyses the reaction 4-imidazolone-5-propanoate + H2O = N-formimidoyl-L-glutamate. Its pathway is amino-acid degradation; L-histidine degradation into L-glutamate; N-formimidoyl-L-glutamate from L-histidine: step 3/3. In terms of biological role, catalyzes the hydrolytic cleavage of the carbon-nitrogen bond in imidazolone-5-propanoate to yield N-formimidoyl-L-glutamate. It is the third step in the universal histidine degradation pathway. The sequence is that of Imidazolonepropionase from Burkholderia pseudomallei (strain 1710b).